Reading from the N-terminus, the 484-residue chain is UDP-N-acetylmuramoyl-L-alanyl-D-glutamate--2,6-diaminopimelate ligase (484 aa).

Residue Ser30 coordinates UDP-N-acetyl-alpha-D-muramoyl-L-alanyl-D-glutamate. Gly111–Thr117 contributes to the ATP binding site. UDP-N-acetyl-alpha-D-muramoyl-L-alanyl-D-glutamate contacts are provided by residues Thr153–Thr154, Ser180, Gln186, and Arg188. Lys220 carries the N6-carboxylysine modification. Residues Arg378, Asp402–Arg405, Gly455, and Glu459 contribute to the meso-2,6-diaminopimelate site. Residues Asp402–Arg405 carry the Meso-diaminopimelate recognition motif motif.

It belongs to the MurCDEF family. MurE subfamily. Requires Mg(2+) as cofactor. Carboxylation is probably crucial for Mg(2+) binding and, consequently, for the gamma-phosphate positioning of ATP.

The protein resides in the cytoplasm. The catalysed reaction is UDP-N-acetyl-alpha-D-muramoyl-L-alanyl-D-glutamate + meso-2,6-diaminopimelate + ATP = UDP-N-acetyl-alpha-D-muramoyl-L-alanyl-gamma-D-glutamyl-meso-2,6-diaminopimelate + ADP + phosphate + H(+). It participates in cell wall biogenesis; peptidoglycan biosynthesis. In terms of biological role, catalyzes the addition of meso-diaminopimelic acid to the nucleotide precursor UDP-N-acetylmuramoyl-L-alanyl-D-glutamate (UMAG) in the biosynthesis of bacterial cell-wall peptidoglycan. This Phocaeicola vulgatus (strain ATCC 8482 / DSM 1447 / JCM 5826 / CCUG 4940 / NBRC 14291 / NCTC 11154) (Bacteroides vulgatus) protein is UDP-N-acetylmuramoyl-L-alanyl-D-glutamate--2,6-diaminopimelate ligase.